The sequence spans 128 residues: Iron-sulfur cluster insertion protein ErpA 1 (128 aa).

Iron-sulfur cluster contacts are provided by C47, C111, and C113.

This sequence belongs to the HesB/IscA family. In terms of assembly, homodimer. Requires iron-sulfur cluster as cofactor.

Its function is as follows. Required for insertion of 4Fe-4S clusters for at least IspG. The polypeptide is Iron-sulfur cluster insertion protein ErpA 1 (Methylococcus capsulatus (strain ATCC 33009 / NCIMB 11132 / Bath)).